Here is a 103-residue protein sequence, read N- to C-terminus: Small ribosomal subunit protein eS24 (103 aa).

Belongs to the eukaryotic ribosomal protein eS24 family.

This Methanococcus maripaludis (strain C6 / ATCC BAA-1332) protein is Small ribosomal subunit protein eS24.